Here is a 399-residue protein sequence, read N- to C-terminus: STOREKEEPER protein (399 aa).

2 disordered regions span residues 1–160 (MAPK…RSLW) and 250–301 (GISN…EEQQ). Positions 20-54 (EEQELVEESQEEEEQQSREEEGEEESGEETEEDEE) are enriched in acidic residues. A compositionally biased stretch (polar residues) spans 69–79 (KLVQTPQKPQF). Low complexity-rich tracts occupy residues 80–100 (SSES…SGNS) and 116–125 (AAKAATPSKP). Basic and acidic residues-rich tracts occupy residues 143 to 152 (KIAEEEEKKS) and 270 to 299 (KTVE…KEEE).

This sequence belongs to the GeBP family. As to expression, expressed in tubers and in leaves treated with sucrose.

The protein resides in the nucleus. Functionally, may act as a transcriptional regulator. Binds specifically to the B-box motif, a promoter element that is required for the tuber-specific and sucrose inducible expression of the patatin gene. This Solanum tuberosum (Potato) protein is STOREKEEPER protein.